Consider the following 611-residue polypeptide: Alkyldihydroxyacetonephosphate synthase (611 aa).

The region spanning 137-317 (VKNAPDLIVL…TEAVMKVHAV (181 aa)) is the FAD-binding PCMH-type domain. Residues 169–175 (PMGGGSN), 237–243 (DSFEFST), 250–255 (TCSSGH), and 301–307 (EGTLGII) each bind FAD. Residue Arg447 coordinates substrate. Residue Tyr508 is the Proton donor/acceptor of the active site. An important for enzyme activity region spans residues 544–546 (HHH). Residues 609 to 611 (PKL) carry the Microbody targeting signal motif.

The protein belongs to the FAD-binding oxidoreductase/transferase type 4 family. As to quaternary structure, homodimer. FAD serves as cofactor.

Its subcellular location is the peroxisome. It carries out the reaction a long chain fatty alcohol + a 1-acylglycerone 3-phosphate = a 1-O-alkylglycerone 3-phosphate + a long-chain fatty acid + H(+). The protein operates within glycerolipid metabolism; ether lipid biosynthesis. In terms of biological role, catalyzes the exchange of an acyl for a long-chain alkyl group and the formation of the ether bond in the biosynthesis of ether phospholipids. This is Alkyldihydroxyacetonephosphate synthase (eapA) from Dictyostelium discoideum (Social amoeba).